Consider the following 476-residue polypeptide: ESRRGGGGPAAAAAAAGDPRGPMPGFGAPQHTIPTNVNVMQPSRVADLGALAHSAGFRIEDLANFSTNNLFNLKPNTHAYTSDPLQFGNYGKSISPTDLATTAAAAAAVTAVDPQALLQQKGVQPNLVALRTHNNDNWGESSMADTSPRTDTSTDPDIDIDERNQMFEQGQLAAPTASDSSDKSRDKLDHKSLRRLAQNREAARKSRLRKKAYIQNLESSRLKLTQLEQELQRARQQGIFISSSGDQSQSASGNGAVAFDMEYARWLEEHNKHINELRAAANAHAGDDDLRKIVDSIMSQYDEFFRLKGVAAKADVFHVLSGMWKTPAERCFMWLGGFRSSELLKLLAGQLEPLTEQQLTGICNLQQSSQQAEDALSQGMEALQQSLAETLASGSLGPAGSSGNVASYMGQMAMAMGKLGTLENFLRQADNLRLQTLQQMQRILTTRQSARALLAISDYFSRLRALSSLWLARPRE.

Disordered stretches follow at residues Glu-1–Pro-29, His-133–Asp-159, and Gln-171–Arg-207. Residues Ala-10–Gly-25 show a composition bias toward low complexity. A compositionally biased stretch (polar residues) spans Asn-135 to Ala-144. The segment covering Ser-180 to Lys-191 has biased composition (basic and acidic residues). One can recognise a bZIP domain in the interval Asp-189–Ser-252. Residues Lys-191–Lys-211 are basic motif. Positions Glu-201–Ser-242 form a coiled coil. The leucine-zipper stretch occupies residues Leu-217 to Leu-231. Residues Ala-256–Arg-473 enclose the DOG1 domain.

The protein belongs to the bZIP family. Binds DNA as a dimer.

It is found in the nucleus. Its function is as follows. Transcriptional activator that binds specifically to the DNA sequence 5'-TGACG-3'. Recognizes ocs elements like the as-1 motif of the cauliflower mosaic virus 35S promoter. Binding to the as-1-like cis elements mediate auxin- and salicylic acid-inducible transcription. Binds to the hexamer motif 5'-ACGTCA-3' of histone gene promoters. The polypeptide is Transcription factor HBP-1b(c1) (Triticum aestivum (Wheat)).